The following is a 348-amino-acid chain: sn-glycerol-3-phosphate import ATP-binding protein UgpC 3 (348 aa).

The 231-residue stretch at 4-234 (INIVDVKKNY…PASLFVAGFI (231 aa)) folds into the ABC transporter domain. Residue 36 to 43 (GPSGCGKS) participates in ATP binding.

The protein belongs to the ABC transporter superfamily. sn-glycerol-3-phosphate importer (TC 3.A.1.1.3) family. The complex is composed of two ATP-binding proteins (UgpC), two transmembrane proteins (UgpA and UgpE) and a solute-binding protein (UgpB).

It is found in the cell inner membrane. It carries out the reaction sn-glycerol 3-phosphate(out) + ATP + H2O = sn-glycerol 3-phosphate(in) + ADP + phosphate + H(+). Functionally, part of the ABC transporter complex UgpBAEC involved in sn-glycerol-3-phosphate (G3P) import. Responsible for energy coupling to the transport system. The sequence is that of sn-glycerol-3-phosphate import ATP-binding protein UgpC 3 from Rhizobium etli (strain ATCC 51251 / DSM 11541 / JCM 21823 / NBRC 15573 / CFN 42).